The chain runs to 538 residues: DALR anticodon-binding domain-containing protein 3 (538 aa).

As to quaternary structure, part of a complex containing tRNA(Arg) and METTL2. Interacts with tRNA(Arg)(CCU) and tRNA(Arg)(UCU). Interacts with METTL2.

Involved in tRNA methylation. Facilitates the recognition and targeting of tRNA(Arg)(CCU) and tRNA(Arg)(UCU) substrates for N(3)-methylcytidine modification by METTL2. The chain is DALR anticodon-binding domain-containing protein 3 (Dalrd3) from Rattus norvegicus (Rat).